Here is a 558-residue protein sequence, read N- to C-terminus: Formate--tetrahydrofolate ligase (558 aa).

An ATP-binding site is contributed by 65–72 (TPAGEGKT).

This sequence belongs to the formate--tetrahydrofolate ligase family.

The catalysed reaction is (6S)-5,6,7,8-tetrahydrofolate + formate + ATP = (6R)-10-formyltetrahydrofolate + ADP + phosphate. Its pathway is one-carbon metabolism; tetrahydrofolate interconversion. This is Formate--tetrahydrofolate ligase from Methylobacterium nodulans (strain LMG 21967 / CNCM I-2342 / ORS 2060).